The sequence spans 261 residues: Succinate dehydrogenase iron-sulfur subunit (261 aa).

Positions 28-119 constitute a 2Fe-2S ferredoxin-type domain; that stretch reads RKVQVYRYDP…DIKIYPLPHM (92 aa). Residues cysteine 80, cysteine 85, and cysteine 100 each coordinate [2Fe-2S] cluster. Positions 161-191 constitute a 4Fe-4S ferredoxin-type domain; the sequence is DREKLDGLYECILCACCSTSCPSYWWNSDKY. [4Fe-4S] cluster contacts are provided by cysteine 171, cysteine 174, and cysteine 177. [3Fe-4S] cluster is bound at residue cysteine 181. Tryptophan 186 is a binding site for a ubiquinone. Residues cysteine 228 and cysteine 234 each contribute to the [3Fe-4S] cluster site. A [4Fe-4S] cluster-binding site is contributed by cysteine 238.

It belongs to the succinate dehydrogenase/fumarate reductase iron-sulfur protein family. In terms of assembly, part of an enzyme complex containing four subunits: a flavoprotein, an iron-sulfur, cytochrome b-556, and a hydrophobic anchor protein. It depends on [2Fe-2S] cluster as a cofactor. [3Fe-4S] cluster is required as a cofactor. The cofactor is [4Fe-4S] cluster.

The catalysed reaction is a quinone + succinate = fumarate + a quinol. It participates in carbohydrate metabolism; tricarboxylic acid cycle; fumarate from succinate (bacterial route): step 1/1. This Rickettsia typhi (strain ATCC VR-144 / Wilmington) protein is Succinate dehydrogenase iron-sulfur subunit (sdhB).